Reading from the N-terminus, the 360-residue chain is S-adenosylmethionine:tRNA ribosyltransferase-isomerase (360 aa).

Belongs to the QueA family. As to quaternary structure, monomer.

It localises to the cytoplasm. The enzyme catalyses 7-aminomethyl-7-carbaguanosine(34) in tRNA + S-adenosyl-L-methionine = epoxyqueuosine(34) in tRNA + adenine + L-methionine + 2 H(+). The protein operates within tRNA modification; tRNA-queuosine biosynthesis. Functionally, transfers and isomerizes the ribose moiety from AdoMet to the 7-aminomethyl group of 7-deazaguanine (preQ1-tRNA) to give epoxyqueuosine (oQ-tRNA). In Rhizobium meliloti (strain 1021) (Ensifer meliloti), this protein is S-adenosylmethionine:tRNA ribosyltransferase-isomerase.